The primary structure comprises 495 residues: Phytochrome A type 5 (495 aa).

Residues 1–21 (MSSSRPASSSSSRNRQSSQAR) show a composition bias toward low complexity. The interval 1–24 (MSSSRPASSSSSRNRQSSQARVLA) is disordered. Positions 217-402 (SMEMLCNTVV…VFAVHVNREF (186 aa)) constitute a GAF domain. Position 322 (Cys-322) interacts with phytochromobilin.

Belongs to the phytochrome family. As to quaternary structure, homodimer. Contains one covalently linked phytochromobilin chromophore.

Functionally, regulatory photoreceptor which exists in two forms that are reversibly interconvertible by light: the Pr form that absorbs maximally in the red region of the spectrum and the Pfr form that absorbs maximally in the far-red region. Photoconversion of Pr to Pfr induces an array of morphogenic responses, whereas reconversion of Pfr to Pr cancels the induction of those responses. Pfr controls the expression of a number of nuclear genes including those encoding the small subunit of ribulose-bisphosphate carboxylase, chlorophyll A/B binding protein, protochlorophyllide reductase, rRNA, etc. It also controls the expression of its own gene(s) in a negative feedback fashion. The protein is Phytochrome A type 5 (PHYA5) of Avena sativa (Oat).